Consider the following 243-residue polypeptide: Transmembrane protein 174 (243 aa).

Transmembrane regions (helical) follow at residues Leu40–Ile60 and Leu73–Phe93. The segment at Ala205–Cys229 is disordered.

In terms of assembly, interacts with SLC34A1; regulates SLC34A1 internalization by PTH and FGF23.

The protein resides in the endoplasmic reticulum membrane. The protein localises to the apical cell membrane. In terms of biological role, regulator of plasma phosphate homeostasis. Decreases serum inorganic phosphate (Pi) uptake by regulating the sodium-phosphate cotransporter SLC34A1 trafficking by PTH and FGF23 in the kidney. This Rattus norvegicus (Rat) protein is Transmembrane protein 174 (Tmem174).